We begin with the raw amino-acid sequence, 353 residues long: tRNA N6-adenosine threonylcarbamoyltransferase (353 aa).

The Fe cation site is built by His119 and His123. Substrate-binding positions include 145-149 (LVSGG), Asp178, Gly191, and Asn285. Asp313 contacts Fe cation.

Belongs to the KAE1 / TsaD family. Requires Fe(2+) as cofactor.

Its subcellular location is the cytoplasm. It catalyses the reaction L-threonylcarbamoyladenylate + adenosine(37) in tRNA = N(6)-L-threonylcarbamoyladenosine(37) in tRNA + AMP + H(+). Functionally, required for the formation of a threonylcarbamoyl group on adenosine at position 37 (t(6)A37) in tRNAs that read codons beginning with adenine. Is involved in the transfer of the threonylcarbamoyl moiety of threonylcarbamoyl-AMP (TC-AMP) to the N6 group of A37, together with TsaE and TsaB. TsaD likely plays a direct catalytic role in this reaction. In Magnetococcus marinus (strain ATCC BAA-1437 / JCM 17883 / MC-1), this protein is tRNA N6-adenosine threonylcarbamoyltransferase.